The primary structure comprises 294 residues: Glycine--tRNA ligase alpha subunit (294 aa).

This sequence belongs to the class-II aminoacyl-tRNA synthetase family. Tetramer of two alpha and two beta subunits.

It localises to the cytoplasm. The catalysed reaction is tRNA(Gly) + glycine + ATP = glycyl-tRNA(Gly) + AMP + diphosphate. The protein is Glycine--tRNA ligase alpha subunit of Sulfurovum sp. (strain NBC37-1).